A 141-amino-acid chain; its full sequence is Large ribosomal subunit protein uL11 (141 aa).

This sequence belongs to the universal ribosomal protein uL11 family. Part of the ribosomal stalk of the 50S ribosomal subunit. Interacts with L10 and the large rRNA to form the base of the stalk. L10 forms an elongated spine to which L12 dimers bind in a sequential fashion forming a multimeric L10(L12)X complex. One or more lysine residues are methylated.

Its function is as follows. Forms part of the ribosomal stalk which helps the ribosome interact with GTP-bound translation factors. This Maridesulfovibrio salexigens (strain ATCC 14822 / DSM 2638 / NCIMB 8403 / VKM B-1763) (Desulfovibrio salexigens) protein is Large ribosomal subunit protein uL11.